Reading from the N-terminus, the 394-residue chain is Chaperone protein DnaJ (394 aa).

Positions Asp5 to Gly75 constitute a J domain. A CR-type zinc finger spans residues Gly150–Thr231. Zn(2+) contacts are provided by Cys163, Cys166, Cys179, Cys182, Cys205, Cys208, Cys219, and Cys222. 4 CXXCXGXG motif repeats span residues Cys163–Gly170, Cys179–Gly186, Cys205–Gly212, and Cys219–Gly226.

The protein belongs to the DnaJ family. Homodimer. Zn(2+) is required as a cofactor.

The protein resides in the cytoplasm. Functionally, participates actively in the response to hyperosmotic and heat shock by preventing the aggregation of stress-denatured proteins and by disaggregating proteins, also in an autonomous, DnaK-independent fashion. Unfolded proteins bind initially to DnaJ; upon interaction with the DnaJ-bound protein, DnaK hydrolyzes its bound ATP, resulting in the formation of a stable complex. GrpE releases ADP from DnaK; ATP binding to DnaK triggers the release of the substrate protein, thus completing the reaction cycle. Several rounds of ATP-dependent interactions between DnaJ, DnaK and GrpE are required for fully efficient folding. Also involved, together with DnaK and GrpE, in the DNA replication of plasmids through activation of initiation proteins. The protein is Chaperone protein DnaJ of Fusobacterium nucleatum subsp. polymorphum (Fusobacterium polymorphum).